The following is a 373-amino-acid chain: ASGVIKCKAAVAWEAGKPLSIEEIEVAPPKAHEVRVKIIATAVCHTDAYTLSGADPEGSFPVILGHEGAGIVESVGEGVTKFKPGDTVIPLYIPQCGECKFCLNPKTNLCQKIRVTQGKGVMPDGTSRFTCKGKQVLHFMGTSTFSEYTVVADISLTKINASAPLDKVCLLGCGVSTGYGAALNTAKVEPGSTCAVFGLGGVGLAVIMGCKVAGASRIIGIDLNKDKFAKAKEFGATECISPADFKKPIQEVLIEMTDGGVDYSFECIGNVGVMRAALEACHKGWGVSVIVGVAAAGQEIATRPFQLVTGRTWKGTAFGGWKSVESVPKLVDEYMSKKMKVDEFVTHTLPFEQINEAFELMHAGKSIRSVLKF.

A1 is subject to N-acetylalanine. Residues C44, H66, C96, C99, C102, C110, and C173 each coordinate Zn(2+).

It belongs to the zinc-containing alcohol dehydrogenase family. Class-III subfamily. In terms of assembly, homodimer. Zn(2+) serves as cofactor.

The protein resides in the cytoplasm. The catalysed reaction is a primary alcohol + NAD(+) = an aldehyde + NADH + H(+). It catalyses the reaction a secondary alcohol + NAD(+) = a ketone + NADH + H(+). It carries out the reaction S-(hydroxymethyl)glutathione + NADP(+) = S-formylglutathione + NADPH + H(+). The enzyme catalyses S-(hydroxymethyl)glutathione + NAD(+) = S-formylglutathione + NADH + H(+). The catalysed reaction is S-nitrosoglutathione + NADH + H(+) = S-(hydroxysulfenamide)glutathione + NAD(+). Functionally, class-III ADH is remarkably ineffective in oxidizing ethanol, but it readily catalyzes the oxidation of long-chain primary alcohols and the oxidation of S-(hydroxymethyl) glutathione. Also acts as a S-nitroso-glutathione reductase by catalyzing the NADH-dependent reduction of S-nitrosoglutathione, thereby regulating protein S-nitrosylation. The sequence is that of Alcohol dehydrogenase class-3 from Saara hardwickii (Indian spiny-tailed lizard).